Consider the following 49-residue polypeptide: MARYRCCRSRSRSRCRPRRRRCRRRRRRCCRRRRRVCCRRYSARCRRRR.

This sequence belongs to the protamine P1 family. In terms of tissue distribution, testis.

It localises to the nucleus. It is found in the chromosome. Functionally, protamines substitute for histones in the chromatin of sperm during the haploid phase of spermatogenesis. They compact sperm DNA into a highly condensed, stable and inactive complex. This chain is Sperm protamine P1 (PRM1), found in Rhinopoma hardwickii (Lesser mouse-tailed bat).